The primary structure comprises 313 residues: Ribosomal RNA small subunit methyltransferase H (313 aa).

S-adenosyl-L-methionine-binding positions include glycine 35 to histidine 37, aspartate 55, phenylalanine 79, aspartate 100, and glutamine 107.

This sequence belongs to the methyltransferase superfamily. RsmH family.

It is found in the cytoplasm. The catalysed reaction is cytidine(1402) in 16S rRNA + S-adenosyl-L-methionine = N(4)-methylcytidine(1402) in 16S rRNA + S-adenosyl-L-homocysteine + H(+). Specifically methylates the N4 position of cytidine in position 1402 (C1402) of 16S rRNA. The protein is Ribosomal RNA small subunit methyltransferase H of Burkholderia vietnamiensis (strain G4 / LMG 22486) (Burkholderia cepacia (strain R1808)).